A 137-amino-acid polypeptide reads, in one-letter code: Large-conductance mechanosensitive channel (137 aa).

2 helical membrane passes run 9–29 and 79–99; these read AFAV…GAAF and IQTI…VKAI.

The protein belongs to the MscL family. Homopentamer.

Its subcellular location is the cell inner membrane. Its function is as follows. Channel that opens in response to stretch forces in the membrane lipid bilayer. May participate in the regulation of osmotic pressure changes within the cell. The polypeptide is Large-conductance mechanosensitive channel (Pseudomonas paraeruginosa (strain DSM 24068 / PA7) (Pseudomonas aeruginosa (strain PA7))).